Here is a 929-residue protein sequence, read N- to C-terminus: LPS-assembly protein LptD (929 aa).

An N-terminal signal peptide occupies residues 1–24 (MKLRFIRSAGWLFLLFCLACNARA). Residues 26–208 (LPPLSSKPEQ…EAGDEKLRLA (183 aa)) form a disordered region. Residues 44–74 (GDDKPVVIDTERIRGHHEYESGTRSESELRS) are compositionally biased toward basic and acidic residues. Residues 154-164 (RTQSAPRTLSA) are compositionally biased toward polar residues. Basic and acidic residues predominate over residues 181 to 208 (DQDRPGFAEGERIGGHREEAGDEKLRLA).

The protein belongs to the LptD family. In terms of assembly, component of the lipopolysaccharide transport and assembly complex. Interacts with LptE and LptA.

The protein localises to the cell outer membrane. Its function is as follows. Together with LptE, is involved in the assembly of lipopolysaccharide (LPS) at the surface of the outer membrane. This chain is LPS-assembly protein LptD, found in Nitrosospira multiformis (strain ATCC 25196 / NCIMB 11849 / C 71).